The following is a 350-amino-acid chain: UDP-N-acetylenolpyruvoylglucosamine reductase (350 aa).

The FAD-binding PCMH-type domain occupies 24 to 195 (HVEATARWLL…VAVEFNLPLL (172 aa)). Residue Arg-172 is part of the active site. Residue Ser-245 is the Proton donor of the active site. Glu-342 is an active-site residue.

It belongs to the MurB family. The cofactor is FAD.

It localises to the cytoplasm. The enzyme catalyses UDP-N-acetyl-alpha-D-muramate + NADP(+) = UDP-N-acetyl-3-O-(1-carboxyvinyl)-alpha-D-glucosamine + NADPH + H(+). The protein operates within cell wall biogenesis; peptidoglycan biosynthesis. In terms of biological role, cell wall formation. This Xanthomonas oryzae pv. oryzae (strain MAFF 311018) protein is UDP-N-acetylenolpyruvoylglucosamine reductase.